A 69-amino-acid chain; its full sequence is Large ribosomal subunit protein uL29 (69 aa).

It belongs to the universal ribosomal protein uL29 family.

This is Large ribosomal subunit protein uL29 from Granulibacter bethesdensis (strain ATCC BAA-1260 / CGDNIH1).